The sequence spans 440 residues: Chromosomal replication initiator protein DnaA (440 aa).

The domain I, interacts with DnaA modulators stretch occupies residues M1–N74. Residues N74 to T99 form a domain II region. Positions I100 to A316 are domain III, AAA+ region. G146, G148, K149, and T150 together coordinate ATP. Residues T317 to S440 are domain IV, binds dsDNA.

Belongs to the DnaA family. In terms of assembly, oligomerizes as a right-handed, spiral filament on DNA at oriC.

The protein localises to the cytoplasm. In terms of biological role, plays an essential role in the initiation and regulation of chromosomal replication. ATP-DnaA binds to the origin of replication (oriC) to initiate formation of the DNA replication initiation complex once per cell cycle. Binds the DnaA box (a 9 base pair repeat at the origin) and separates the double-stranded (ds)DNA. Forms a right-handed helical filament on oriC DNA; dsDNA binds to the exterior of the filament while single-stranded (ss)DNA is stabiized in the filament's interior. The ATP-DnaA-oriC complex binds and stabilizes one strand of the AT-rich DNA unwinding element (DUE), permitting loading of DNA polymerase. After initiation quickly degrades to an ADP-DnaA complex that is not apt for DNA replication. Binds acidic phospholipids. The chain is Chromosomal replication initiator protein DnaA from Campylobacter jejuni subsp. jejuni serotype O:2 (strain ATCC 700819 / NCTC 11168).